A 349-amino-acid chain; its full sequence is MISEVLDDIIDKNRNLTVDEAYECMDDLVSGNYPNVVVSSFLTALRMKGETIDEITGLTRSMKNHAVQIDYKPEDYLIETCGTGGDTFKTFNVSTVASIIASAGGAKISKHGNRSVSSKFGGADALEALGVNIELSPEKVINSIDKCNFAFIFAPIYHVATKNVMMIRKQLKTRTVFNLLGPISCPTNVNARLTGIYDPELLETIAKVAMNLGVECGMIVHGFDENGNPAMDEISNIGKTKVAFIDNGDITVKYITPEDFGLSFSKPEDIVAPETPQEHIQIIYNILNNVTTTSQDRARLDLCLMNSASILYLTKKVDSLEEGVIYSRKLIEDGSAKKQLEKIIKYSNE.

Residues Gly-82, 85–86 (GD), Thr-90, 92–95 (NVST), 110–118 (KHGNRSVSS), and Gly-122 each bind 5-phospho-alpha-D-ribose 1-diphosphate. Gly-82 contributes to the anthranilate binding site. Ser-94 provides a ligand contact to Mg(2+). Position 113 (Asn-113) interacts with anthranilate. Arg-168 contacts anthranilate. Mg(2+) is bound by residues Asp-232 and Glu-233.

Belongs to the anthranilate phosphoribosyltransferase family. As to quaternary structure, homodimer. It depends on Mg(2+) as a cofactor.

It catalyses the reaction N-(5-phospho-beta-D-ribosyl)anthranilate + diphosphate = 5-phospho-alpha-D-ribose 1-diphosphate + anthranilate. The protein operates within amino-acid biosynthesis; L-tryptophan biosynthesis; L-tryptophan from chorismate: step 2/5. In terms of biological role, catalyzes the transfer of the phosphoribosyl group of 5-phosphorylribose-1-pyrophosphate (PRPP) to anthranilate to yield N-(5'-phosphoribosyl)-anthranilate (PRA). The protein is Anthranilate phosphoribosyltransferase of Methanosphaera stadtmanae (strain ATCC 43021 / DSM 3091 / JCM 11832 / MCB-3).